The following is a 1771-amino-acid chain: Replicase polyprotein (1771 aa).

Residues 1 to 29 adopt a coiled-coil conformation; the sequence is MSFQQTNNNATNNINSLEELAAQELIAAQ. The interval 16-25 is BC-box; that stretch reads SLEELAAQEL. Residues 106–114 are interaction with and inhibition of host AGO2; that stretch reads PEHRYGSTF. The SF3 helicase domain occupies 482–656; sequence AKSLYEQVLL…QEKSIWVRNA (175 aa). 510–517 contacts ATP; it reads GESGIGKT. The interval 919–942 is disordered; it reads VEVGSSGDSKTQKQRNTKVEVGKE. In terms of domain architecture, Peptidase C3 spans 954–1201; the sequence is DPAAHALVLD…YACPLTQEAI (248 aa). Residues His-1003, Asp-1063, and Cys-1162 each act as for picornain 3C-like protease activity in the active site. A coiled-coil region spans residues 1385-1413; the sequence is GEQYDFTSQRAQELRRDVEELIDNCAKGI. In terms of domain architecture, RdRp catalytic spans 1495 to 1634; it reads NKVIAGDFGN…NISDRVVEWF (140 aa).

Interacts with host AGO2; this interaction leads to AGO2 degradation via an E3 ubiquitin ligase-dependent pathway and may block the RNA-induced silencing complexes (RISC) activity. Post-translationally, might be expressed through a ribosomal skip from one codon to the next without formation of a peptide bond.

Its subcellular location is the host cytoplasm. It localises to the host perinuclear region. It carries out the reaction RNA(n) + a ribonucleoside 5'-triphosphate = RNA(n+1) + diphosphate. Suppressor of RNA-mediated gene silencing, an antiviral defense mechanism of insect cells. Inhibits siRNA function through the direct enzymatic inactivation of host AGO2, but does not interfere with miRNA pathway. Facilitates viral replication via the recruitment of a cellular ubiquitin ligase complex that promotes host AGO2 degradation. Inhibits the integrated stress response (ISR) in the infected cell possiby by degrading host Nup358. Stress granule formation is thus inhibited, which allows protein synthesis and viral replication. Does not bind to dsRNA or siRNA. Its function is as follows. Replicates the genomic and antigenomic RNA. The protein is Replicase polyprotein of Teleogryllus oceanicus (black field cricket).